We begin with the raw amino-acid sequence, 120 residues long: Large ribosomal subunit protein uL22 (120 aa).

It belongs to the universal ribosomal protein uL22 family. As to quaternary structure, part of the 50S ribosomal subunit.

Functionally, this protein binds specifically to 23S rRNA; its binding is stimulated by other ribosomal proteins, e.g. L4, L17, and L20. It is important during the early stages of 50S assembly. It makes multiple contacts with different domains of the 23S rRNA in the assembled 50S subunit and ribosome. The globular domain of the protein is located near the polypeptide exit tunnel on the outside of the subunit, while an extended beta-hairpin is found that lines the wall of the exit tunnel in the center of the 70S ribosome. This chain is Large ribosomal subunit protein uL22, found in Corynebacterium kroppenstedtii (strain DSM 44385 / JCM 11950 / CIP 105744 / CCUG 35717).